Reading from the N-terminus, the 397-residue chain is Probable N-succinyldiaminopimelate aminotransferase DapC (397 aa).

Residues 109 to 110 (GS) and 218 to 222 (DGMAE) contribute to the pyridoxal 5'-phosphate site. Lysine 232 carries the N6-(pyridoxal phosphate)lysine modification.

It belongs to the class-III pyridoxal-phosphate-dependent aminotransferase family. As to quaternary structure, homodimer. It depends on pyridoxal 5'-phosphate as a cofactor.

It is found in the cytoplasm. The catalysed reaction is N-succinyl-(2S,6S)-2,6-diaminopimelate + 2-oxoglutarate = (S)-2-succinylamino-6-oxoheptanedioate + L-glutamate. It functions in the pathway amino-acid biosynthesis; L-lysine biosynthesis via DAP pathway; LL-2,6-diaminopimelate from (S)-tetrahydrodipicolinate (succinylase route): step 2/3. Functionally, involved in the lysine biosynthetic pathways. It catalyzes the transfer of an amino group from L-glutamate to N-succinyl-2-l-amino-6-oxoheptanedioate (N-succinyl-2-l-amino-6-ketopimelate) in a PLP-dependent reaction, yielding as products N-succinyl-l-2,6-diaminoheptanedioate (N-succinyl-diaminopimelate) and 2-oxoglutarate. In Mycobacterium tuberculosis (strain CDC 1551 / Oshkosh), this protein is Probable N-succinyldiaminopimelate aminotransferase DapC (dapC).